The primary structure comprises 632 residues: Probable potassium transport system protein Kup (632 aa).

Transmembrane regions (helical) follow at residues 19–39 (LLCLAALGVVYGDIGTSPLYV), 57–77 (VIGIISLIFWTIMIVVSLKYV), 111–131 (ILFLIGAFGAALFFGDGVITP), 147–167 (PLLQPYVLPITVVVLIALFML), 175–195 (IGALFGPVMVIWFVSLGLVGL), 213–233 (AFAFCISNGWLAFIALGAVVL), 257–277 (WYGGVLPALTLNYLGQGALLL), 286–306 (PFFLLFPSWALYGAVGLATAA), 347–367 (IYIPFVNWTLLSVVLMAVLGF), 376–396 (AYGVAVTTTMVIETTLTFFVL), 404–424 (FLLGILVTAFFLAIDSAFFSA), and 429–449 (VAQGGWFPLVIGSVIFFIMIT).

Belongs to the HAK/KUP transporter (TC 2.A.72) family.

It localises to the cell inner membrane. The enzyme catalyses K(+)(in) + H(+)(in) = K(+)(out) + H(+)(out). In terms of biological role, transport of potassium into the cell. Likely operates as a K(+):H(+) symporter. This chain is Probable potassium transport system protein Kup, found in Nitrosospira multiformis (strain ATCC 25196 / NCIMB 11849 / C 71).